Consider the following 160-residue polypeptide: Major allergen Pru ar 1 (160 aa).

The protein belongs to the BetVI family.

The chain is Major allergen Pru ar 1 from Prunus armeniaca (Apricot).